The following is a 242-amino-acid chain: Small ribosomal subunit protein uS3 (242 aa).

Positions 39-110 (IRKFIHKKYG…QVRINVVEVE (72 aa)) constitute a KH type-2 domain. A disordered region spans residues 216 to 242 (QPMPVGAAPRRRASRRPQQFEDRSNEG). A compositionally biased stretch (basic and acidic residues) spans 233–242 (QQFEDRSNEG).

It belongs to the universal ribosomal protein uS3 family. In terms of assembly, part of the 30S ribosomal subunit. Forms a tight complex with proteins S10 and S14.

Functionally, binds the lower part of the 30S subunit head. Binds mRNA in the 70S ribosome, positioning it for translation. This Synechococcus sp. (strain CC9605) protein is Small ribosomal subunit protein uS3.